A 568-amino-acid chain; its full sequence is Proline--tRNA ligase (568 aa).

Belongs to the class-II aminoacyl-tRNA synthetase family. ProS type 1 subfamily. In terms of assembly, homodimer.

The protein localises to the cytoplasm. It carries out the reaction tRNA(Pro) + L-proline + ATP = L-prolyl-tRNA(Pro) + AMP + diphosphate. In terms of biological role, catalyzes the attachment of proline to tRNA(Pro) in a two-step reaction: proline is first activated by ATP to form Pro-AMP and then transferred to the acceptor end of tRNA(Pro). As ProRS can inadvertently accommodate and process non-cognate amino acids such as alanine and cysteine, to avoid such errors it has two additional distinct editing activities against alanine. One activity is designated as 'pretransfer' editing and involves the tRNA(Pro)-independent hydrolysis of activated Ala-AMP. The other activity is designated 'posttransfer' editing and involves deacylation of mischarged Ala-tRNA(Pro). The misacylated Cys-tRNA(Pro) is not edited by ProRS. The sequence is that of Proline--tRNA ligase from Listeria monocytogenes serovar 1/2a (strain ATCC BAA-679 / EGD-e).